The chain runs to 338 residues: Rho GTPase-activating protein gacA (338 aa).

Positions 149 to 327 (NTLEHVEDEG…NVLSHKVAVH (179 aa)) constitute a Rho-GAP domain.

Its subcellular location is the cytoplasm. Its function is as follows. Rho GTPase-activating protein involved in the signal transduction pathway. The protein is Rho GTPase-activating protein gacA (gacA) of Dictyostelium discoideum (Social amoeba).